Consider the following 357-residue polypeptide: 3-isopropylmalate dehydrogenase (357 aa).

76 to 89 (GPQWDTIDPALRPE) contacts NAD(+). Residues Arg96, Arg106, Arg134, and Asp224 each coordinate substrate. Residues Asp224, Asp248, and Asp252 each coordinate Mg(2+). NAD(+) is bound at residue 282–294 (GSAPDIAGKGIAN).

It belongs to the isocitrate and isopropylmalate dehydrogenases family. LeuB type 1 subfamily. In terms of assembly, homodimer. Requires Mg(2+) as cofactor. It depends on Mn(2+) as a cofactor.

The protein localises to the cytoplasm. It carries out the reaction (2R,3S)-3-isopropylmalate + NAD(+) = 4-methyl-2-oxopentanoate + CO2 + NADH. Its pathway is amino-acid biosynthesis; L-leucine biosynthesis; L-leucine from 3-methyl-2-oxobutanoate: step 3/4. Functionally, catalyzes the oxidation of 3-carboxy-2-hydroxy-4-methylpentanoate (3-isopropylmalate) to 3-carboxy-4-methyl-2-oxopentanoate. The product decarboxylates to 4-methyl-2 oxopentanoate. This chain is 3-isopropylmalate dehydrogenase, found in Xanthomonas axonopodis pv. citri (strain 306).